Consider the following 235-residue polypeptide: MEPKYWNINLEEMMEAGVHSGHQARKWNPKMAPYIFAERKGIHIINLTRTARFSSEACDSVANVASEGKQFSMVGTKYQAADLTASAAIKARCHYVNKKWLGGMLTNWSTMEKRLQKLRDLENKEKTGGFDRLPEKEAAISKGQLAKLKKYLGGIEYMASLPDVVTIVDQREESIAIKECITLNIPTICLVDTDCDPDLADIPIPANDDARASIRWISDKLASAICEGRKSYMKD.

This sequence belongs to the universal ribosomal protein uS2 family.

It localises to the plastid. It is found in the chloroplast. This is Small ribosomal subunit protein uS2c (rps2) from Huperzia lucidula (Shining clubmoss).